The primary structure comprises 159 residues: MSANAEKEHAMLAEVLRDNGYHEYRARLQALLDIPELASDFEIHTRITDGFAATWLVKLTERGVLTPVERDQIIPLRTLKSRIERDQPLTVDESDRLFRSAHITAMAEAVFGEAGKAKRWLSKPKERFSGLTPMQMLTTQQGTTQVEEMLLQIAEGYGL.

Belongs to the MbcA/ParS/Xre antitoxin family. As to quaternary structure, homodimer. Forms a complex with cognate toxin Res; the 2 toxin molecules dimerize and each contacts an Xre homodimer. Most Res-Xre contacts are between the antitoxin molecule closest to the toxin.

Functionally, probable antitoxin component of a type II toxin-antitoxin (TA) system. In vivo probably neutralizes the toxic effect of cognate toxin Res. In Pseudomonas putida (strain ATCC 47054 / DSM 6125 / CFBP 8728 / NCIMB 11950 / KT2440), this protein is Antitoxin Xre.